We begin with the raw amino-acid sequence, 467 residues long: ATP synthase subunit beta (467 aa).

Residue glycine 150 to threonine 157 coordinates ATP.

This sequence belongs to the ATPase alpha/beta chains family. As to quaternary structure, F-type ATPases have 2 components, CF(1) - the catalytic core - and CF(0) - the membrane proton channel. CF(1) has five subunits: alpha(3), beta(3), gamma(1), delta(1), epsilon(1). CF(0) has three main subunits: a(1), b(2) and c(9-12). The alpha and beta chains form an alternating ring which encloses part of the gamma chain. CF(1) is attached to CF(0) by a central stalk formed by the gamma and epsilon chains, while a peripheral stalk is formed by the delta and b chains.

It localises to the cell inner membrane. The catalysed reaction is ATP + H2O + 4 H(+)(in) = ADP + phosphate + 5 H(+)(out). Functionally, produces ATP from ADP in the presence of a proton gradient across the membrane. The catalytic sites are hosted primarily by the beta subunits. This Aliivibrio fischeri (strain MJ11) (Vibrio fischeri) protein is ATP synthase subunit beta.